Consider the following 116-residue polypeptide: MRHRCNVPQLGRPADQRKALLRSLTTEIIRNGTVTTTKARAKAVRSEVERMVTLAKDGSLAARRQALGYIYDKQLVHLLFEQAPERYAKRQGGYTRILRTVRRRGDNAEMAIIELT.

This sequence belongs to the bacterial ribosomal protein bL17 family. Part of the 50S ribosomal subunit. Contacts protein L32.

The chain is Large ribosomal subunit protein bL17 from Synechococcus elongatus (strain ATCC 33912 / PCC 7942 / FACHB-805) (Anacystis nidulans R2).